A 349-amino-acid polypeptide reads, in one-letter code: Isopentenyl-diphosphate delta-isomerase (349 aa).

9–10 (RK) lines the substrate pocket. FMN is bound by residues 65-67 (AMT), Ser-95, and Asn-124. 95–97 (STH) is a binding site for substrate. Gln-154 contributes to the substrate binding site. Glu-155 contacts Mg(2+). Residues Lys-186, Ser-211, Thr-216, 262-264 (GLR), and 283-284 (SR) each bind FMN.

The protein belongs to the IPP isomerase type 2 family. Homooctamer. Dimer of tetramers. FMN serves as cofactor. It depends on NADPH as a cofactor. Requires Mg(2+) as cofactor.

It localises to the cytoplasm. The enzyme catalyses isopentenyl diphosphate = dimethylallyl diphosphate. Functionally, involved in the biosynthesis of isoprenoids. Catalyzes the 1,3-allylic rearrangement of the homoallylic substrate isopentenyl (IPP) to its allylic isomer, dimethylallyl diphosphate (DMAPP). In Staphylococcus aureus, this protein is Isopentenyl-diphosphate delta-isomerase.